The following is a 338-amino-acid chain: Ketol-acid reductoisomerase (NADP(+)) (338 aa).

A KARI N-terminal Rossmann domain is found at 1 to 181 (MQVYYDKDCD…GGGRSGIIET (181 aa)). NADP(+) is bound by residues 24–27 (YGSQ), Arg47, Ser50, Ser52, and 82–85 (DEFQ). Residue His107 is part of the active site. Gly133 provides a ligand contact to NADP(+). The region spanning 182–327 (TFKDETETDL…GKLRAMMPWI (146 aa)) is the KARI C-terminal knotted domain. Mg(2+)-binding residues include Asp190, Glu194, Glu226, and Glu230. Ser251 provides a ligand contact to substrate.

This sequence belongs to the ketol-acid reductoisomerase family. Mg(2+) is required as a cofactor.

It catalyses the reaction (2R)-2,3-dihydroxy-3-methylbutanoate + NADP(+) = (2S)-2-acetolactate + NADPH + H(+). The catalysed reaction is (2R,3R)-2,3-dihydroxy-3-methylpentanoate + NADP(+) = (S)-2-ethyl-2-hydroxy-3-oxobutanoate + NADPH + H(+). Its pathway is amino-acid biosynthesis; L-isoleucine biosynthesis; L-isoleucine from 2-oxobutanoate: step 2/4. The protein operates within amino-acid biosynthesis; L-valine biosynthesis; L-valine from pyruvate: step 2/4. Functionally, involved in the biosynthesis of branched-chain amino acids (BCAA). Catalyzes an alkyl-migration followed by a ketol-acid reduction of (S)-2-acetolactate (S2AL) to yield (R)-2,3-dihydroxy-isovalerate. In the isomerase reaction, S2AL is rearranged via a Mg-dependent methyl migration to produce 3-hydroxy-3-methyl-2-ketobutyrate (HMKB). In the reductase reaction, this 2-ketoacid undergoes a metal-dependent reduction by NADPH to yield (R)-2,3-dihydroxy-isovalerate. The protein is Ketol-acid reductoisomerase (NADP(+)) of Saccharophagus degradans (strain 2-40 / ATCC 43961 / DSM 17024).